A 441-amino-acid chain; its full sequence is Transcriptional regulatory protein ZraR (441 aa).

The Response regulatory domain occupies 7-121 (DILVVDDDIS…NLQATLEKAL (115 aa)). The residue at position 56 (D56) is a 4-aspartylphosphate. In terms of domain architecture, Sigma-54 factor interaction spans 141–370 (MVGKSPAMQH…LENAVERAVV (230 aa)). ATP contacts are provided by G172, T173, R329, and R359. The segment at residues 421–440 (KTEAARQLGITRKTLLAKLS) is a DNA-binding region (H-T-H motif).

As to quaternary structure, monomer. Phosphorylated by ZraS.

It is found in the cytoplasm. With respect to regulation, activity of the ZraS/ZraR two-component system is repressed by the zinc-bound form of ZraP, which probably interacts with the periplasmic region of ZraS. In terms of biological role, part of the Zra signaling pathway, an envelope stress response (ESR) system composed of the periplasmic accessory protein ZraP, the histidine kinase ZraS and the transcriptional regulator ZraR. The ZraPSR system contributes to antibiotic resistance and is important for membrane integrity in the presence of membrane-targeting biocides. ZraR is a member of the two-component regulatory system ZraS/ZraR. When activated by ZraS, acts in conjunction with sigma-54 to regulate the expression of zraP in the presence of high Zn(2+) or Pb(2+) concentrations. Also positively autoregulates the expression of the zraSR operon. Binds to a region within the zraP-zraSR intergenic region that is characterized by two inverted repeats separated by a 14 bp spacer. In addition, controls a regulon of genes of diverse functions that may be critical to maintain envelope integrity and cell survival under stressful conditions. The system has no direct role in zinc or copper resistance. This is Transcriptional regulatory protein ZraR from Escherichia coli (strain K12).